Here is a 201-residue protein sequence, read N- to C-terminus: Outer-membrane lipoprotein carrier protein (201 aa).

The signal sequence occupies residues 1–21; it reads MKKVLLTVCAIALFGSQAAWA.

It belongs to the LolA family. As to quaternary structure, monomer.

It is found in the periplasm. Its function is as follows. Participates in the translocation of lipoproteins from the inner membrane to the outer membrane. Only forms a complex with a lipoprotein if the residue after the N-terminal Cys is not an aspartate (The Asp acts as a targeting signal to indicate that the lipoprotein should stay in the inner membrane). The sequence is that of Outer-membrane lipoprotein carrier protein from Proteus mirabilis (strain HI4320).